The following is a 355-amino-acid chain: 3-isopropylmalate dehydrogenase (355 aa).

Positions 90, 100, 128, and 222 each coordinate substrate. Asp222, Asp246, and Asp250 together coordinate Mg(2+). Position 280–292 (280–292 (GSAPDIAGKGVAN)) interacts with NAD(+).

This sequence belongs to the isocitrate and isopropylmalate dehydrogenases family. LeuB type 1 subfamily. Homodimer. Requires Mg(2+) as cofactor. Mn(2+) is required as a cofactor.

It is found in the cytoplasm. It catalyses the reaction (2R,3S)-3-isopropylmalate + NAD(+) = 4-methyl-2-oxopentanoate + CO2 + NADH. It functions in the pathway amino-acid biosynthesis; L-leucine biosynthesis; L-leucine from 3-methyl-2-oxobutanoate: step 3/4. Catalyzes the oxidation of 3-carboxy-2-hydroxy-4-methylpentanoate (3-isopropylmalate) to 3-carboxy-4-methyl-2-oxopentanoate. The product decarboxylates to 4-methyl-2 oxopentanoate. The polypeptide is 3-isopropylmalate dehydrogenase (Cupriavidus metallidurans (strain ATCC 43123 / DSM 2839 / NBRC 102507 / CH34) (Ralstonia metallidurans)).